The following is a 127-amino-acid chain: UPF0102 protein Glov_2230 (127 aa).

It belongs to the UPF0102 family.

This chain is UPF0102 protein Glov_2230, found in Trichlorobacter lovleyi (strain ATCC BAA-1151 / DSM 17278 / SZ) (Geobacter lovleyi).